A 197-amino-acid chain; its full sequence is Elongation factor Ts (197 aa).

Residues 81–84 (TDFV) are involved in Mg(2+) ion dislocation from EF-Tu.

This sequence belongs to the EF-Ts family.

Its subcellular location is the cytoplasm. Associates with the EF-Tu.GDP complex and induces the exchange of GDP to GTP. It remains bound to the aminoacyl-tRNA.EF-Tu.GTP complex up to the GTP hydrolysis stage on the ribosome. The protein is Elongation factor Ts of Coprothermobacter proteolyticus (strain ATCC 35245 / DSM 5265 / OCM 4 / BT).